Consider the following 510-residue polypeptide: NAD(P)H-quinone oxidoreductase subunit 2, chloroplastic (510 aa).

A run of 12 helical transmembrane segments spans residues 24–44 (LLLFNGSFIFPECILIFGLIL), 59–79 (WFYFISSTSLVMSITALLFRW), 99–119 (IFQFLILLCSTLCIPLSVEYI), 124–144 (MAITEFLLFVLTATLGGMFLC), 149–169 (LITIFVAPECFSLCSYLLSGY), 183–203 (YLLMGGASSSILVHGFSWLYG), 229–249 (ISIALISITVGIGFKLSPAPF), 295–315 (WHLLLEILAILSMILGNLIAI), 323–343 (MLAYSSIGQIGYVIIGIIVGD), 347–367 (GYASMITYMLFYISMNLGTFA), 395–415 (ALSSALCLLSLGGLPPLAGFF), and 418–438 (LHLFWCGWQAGLYFLVSIGLL).

This sequence belongs to the complex I subunit 2 family. As to quaternary structure, NDH is composed of at least 16 different subunits, 5 of which are encoded in the nucleus.

Its subcellular location is the plastid. The protein resides in the chloroplast thylakoid membrane. It carries out the reaction a plastoquinone + NADH + (n+1) H(+)(in) = a plastoquinol + NAD(+) + n H(+)(out). The enzyme catalyses a plastoquinone + NADPH + (n+1) H(+)(in) = a plastoquinol + NADP(+) + n H(+)(out). Its function is as follows. NDH shuttles electrons from NAD(P)H:plastoquinone, via FMN and iron-sulfur (Fe-S) centers, to quinones in the photosynthetic chain and possibly in a chloroplast respiratory chain. The immediate electron acceptor for the enzyme in this species is believed to be plastoquinone. Couples the redox reaction to proton translocation, and thus conserves the redox energy in a proton gradient. This Allium textile (Textile onion) protein is NAD(P)H-quinone oxidoreductase subunit 2, chloroplastic.